Here is a 211-residue protein sequence, read N- to C-terminus: Lipoprotein signal peptidase (211 aa).

The next 3 membrane-spanning stretches (helical) occupy residues 12–32 (LLALLFVTLVAIDQWTKYLAV), 96–116 (AFRNGFFTLVSLGAVAFILHY), and 127–147 (LQVALALVLSGAVGNFLDRLA). Residues aspartate 153 and aspartate 174 contribute to the active site. A helical transmembrane segment spans residues 167–187 (WPTFNIADSLIVVGVALLVLH).

The protein belongs to the peptidase A8 family.

It is found in the cell inner membrane. The catalysed reaction is Release of signal peptides from bacterial membrane prolipoproteins. Hydrolyzes -Xaa-Yaa-Zaa-|-(S,diacylglyceryl)Cys-, in which Xaa is hydrophobic (preferably Leu), and Yaa (Ala or Ser) and Zaa (Gly or Ala) have small, neutral side chains.. It participates in protein modification; lipoprotein biosynthesis (signal peptide cleavage). This protein specifically catalyzes the removal of signal peptides from prolipoproteins. The sequence is that of Lipoprotein signal peptidase from Anaeromyxobacter sp. (strain Fw109-5).